The chain runs to 220 residues: Probable cutinase 5 (220 aa).

Positions 1–18 (MVALHTLLLTAFAAVSLA) are cleaved as a signal peptide. Cystine bridges form between Cys-42-Cys-121 and Cys-68-Cys-82. Ser-132 serves as the catalytic Nucleophile. A disulfide bond links Cys-183 and Cys-190. Asp-187 is an active-site residue. His-200 functions as the Proton donor/acceptor in the catalytic mechanism.

This sequence belongs to the cutinase family.

Its subcellular location is the secreted. The enzyme catalyses cutin + H2O = cutin monomers.. Functionally, catalyzes the hydrolysis of complex carboxylic polyesters found in the cell wall of plants. Degrades cutin, a macromolecule that forms the structure of the plant cuticle. The protein is Probable cutinase 5 of Aspergillus terreus (strain NIH 2624 / FGSC A1156).